Reading from the N-terminus, the 75-residue chain is Small ribosomal subunit protein bS16 (75 aa).

Belongs to the bacterial ribosomal protein bS16 family.

This chain is Small ribosomal subunit protein bS16, found in Nitratiruptor sp. (strain SB155-2).